Reading from the N-terminus, the 251-residue chain is Imidazole glycerol phosphate synthase subunit HisF (251 aa).

Active-site residues include D11 and D130.

Belongs to the HisA/HisF family. As to quaternary structure, heterodimer of HisH and HisF.

It localises to the cytoplasm. The enzyme catalyses 5-[(5-phospho-1-deoxy-D-ribulos-1-ylimino)methylamino]-1-(5-phospho-beta-D-ribosyl)imidazole-4-carboxamide + L-glutamine = D-erythro-1-(imidazol-4-yl)glycerol 3-phosphate + 5-amino-1-(5-phospho-beta-D-ribosyl)imidazole-4-carboxamide + L-glutamate + H(+). It functions in the pathway amino-acid biosynthesis; L-histidine biosynthesis; L-histidine from 5-phospho-alpha-D-ribose 1-diphosphate: step 5/9. IGPS catalyzes the conversion of PRFAR and glutamine to IGP, AICAR and glutamate. The HisF subunit catalyzes the cyclization activity that produces IGP and AICAR from PRFAR using the ammonia provided by the HisH subunit. This Natranaerobius thermophilus (strain ATCC BAA-1301 / DSM 18059 / JW/NM-WN-LF) protein is Imidazole glycerol phosphate synthase subunit HisF.